Reading from the N-terminus, the 218-residue chain is Small ribosomal subunit protein uS3c (218 aa).

Positions Ile47–Ala118 constitute a KH type-2 domain.

The protein belongs to the universal ribosomal protein uS3 family. Part of the 30S ribosomal subunit.

It is found in the plastid. The protein resides in the chloroplast. In Cycas taitungensis (Prince sago), this protein is Small ribosomal subunit protein uS3c (rps3).